The following is a 415-amino-acid chain: Serine--tRNA ligase (415 aa).

231–233 (TAE) is an L-serine binding site. 262–264 (RSE) provides a ligand contact to ATP. E285 lines the L-serine pocket. 349 to 352 (EISS) is a binding site for ATP. Residue S383 coordinates L-serine.

The protein belongs to the class-II aminoacyl-tRNA synthetase family. Type-1 seryl-tRNA synthetase subfamily. Homodimer. The tRNA molecule binds across the dimer.

It localises to the cytoplasm. The enzyme catalyses tRNA(Ser) + L-serine + ATP = L-seryl-tRNA(Ser) + AMP + diphosphate + H(+). The catalysed reaction is tRNA(Sec) + L-serine + ATP = L-seryl-tRNA(Sec) + AMP + diphosphate + H(+). Its pathway is aminoacyl-tRNA biosynthesis; selenocysteinyl-tRNA(Sec) biosynthesis; L-seryl-tRNA(Sec) from L-serine and tRNA(Sec): step 1/1. Catalyzes the attachment of serine to tRNA(Ser). Is also able to aminoacylate tRNA(Sec) with serine, to form the misacylated tRNA L-seryl-tRNA(Sec), which will be further converted into selenocysteinyl-tRNA(Sec). This chain is Serine--tRNA ligase, found in Helicobacter pylori (strain G27).